The sequence spans 485 residues: Putative ATP-dependent RNA helicase ste13 (485 aa).

The tract at residues 16–38 (DRESFKGQMKAQPVDMRPKTEDV) is disordered. The Q motif motif lies at 44–72 (TEFEDYYLKRELLMGIFEAGFERPSPIQE). The Helicase ATP-binding domain occupies 75 to 245 (IPIALSGRDI…DKHLNKPYEI (171 aa)). 88–95 (AKNGTGKT) is an ATP binding site. Positions 193–196 (DEAD) match the DEAD box motif. The Helicase C-terminal domain occupies 255–415 (GVTQYYAFVD…PIPPSIDPSL (161 aa)). The tract at residues 437-485 (LAAQQAKGQEGYHNRPNNNRGGHPRGGGNRGGYRQSNRQPRYRGQQKAD) is disordered.

This sequence belongs to the DEAD box helicase family. DDX6/DHH1 subfamily.

The protein localises to the cytoplasm. It localises to the P-body. It catalyses the reaction ATP + H2O = ADP + phosphate + H(+). In terms of biological role, ATP-dependent RNA helicase involved in mRNA turnover, and more specifically in mRNA decapping. Is involved in G1/S DNA-damage checkpoint recovery, probably through the regulation of the translational status of a subset of mRNAs. May also have a role in translation and mRNA nuclear export. This chain is Putative ATP-dependent RNA helicase ste13 (ste13), found in Schizosaccharomyces pombe (strain 972 / ATCC 24843) (Fission yeast).